We begin with the raw amino-acid sequence, 87 residues long: MTFDEFKNVMMSQHFKCEVKDDIGHKEIIEYWFEPLEVEDNCIKKVTVCTDWAVSFNFNILDNDTPKSLRDMAVSCIKDAYCEVFDI.

This is an uncharacterized protein from Enterobacteria phage T4 (Bacteriophage T4).